Here is a 357-residue protein sequence, read N- to C-terminus: Phosphoribosylformylglycinamidine cyclo-ligase (357 aa).

Belongs to the AIR synthase family.

The protein localises to the cytoplasm. It carries out the reaction 2-formamido-N(1)-(5-O-phospho-beta-D-ribosyl)acetamidine + ATP = 5-amino-1-(5-phospho-beta-D-ribosyl)imidazole + ADP + phosphate + H(+). It functions in the pathway purine metabolism; IMP biosynthesis via de novo pathway; 5-amino-1-(5-phospho-D-ribosyl)imidazole from N(2)-formyl-N(1)-(5-phospho-D-ribosyl)glycinamide: step 2/2. This chain is Phosphoribosylformylglycinamidine cyclo-ligase, found in Rhodopseudomonas palustris (strain BisB18).